A 217-amino-acid chain; its full sequence is Elongation factor Ts (217 aa).

The interval 82 to 85 (TDFV) is involved in Mg(2+) ion dislocation from EF-Tu.

This sequence belongs to the EF-Ts family.

Its subcellular location is the cytoplasm. Associates with the EF-Tu.GDP complex and induces the exchange of GDP to GTP. It remains bound to the aminoacyl-tRNA.EF-Tu.GTP complex up to the GTP hydrolysis stage on the ribosome. This chain is Elongation factor Ts, found in Prochlorococcus marinus (strain SARG / CCMP1375 / SS120).